Here is a 123-residue protein sequence, read N- to C-terminus: Angiogenin-2 (123 aa).

Glutamine 1 carries the pyrrolidone carboxylic acid modification. The active-site Proton acceptor is the histidine 12. Disulfide bonds link cysteine 25–cysteine 80, cysteine 38–cysteine 91, and cysteine 56–cysteine 106. The short motif at 30–34 (ERRNM) is the Nucleolar localization signal element. N-linked (GlcNAc...) asparagine glycosylation occurs at asparagine 33. 3 residues coordinate Zn(2+): aspartate 40, histidine 82, and histidine 113. The active-site Proton donor is histidine 113.

It belongs to the pancreatic ribonuclease family. Serum and milk.

Its subcellular location is the cytoplasmic vesicle. It localises to the secretory vesicle lumen. It is found in the secreted. The protein localises to the nucleus. The protein resides in the nucleolus. Divalent metal ions, such as Cu2+ and Zn2+, may inhibit the ribonucleolytic activity. Its function is as follows. Binds tightly to placental ribonuclease inhibitor and has very low ribonuclease activity. Has potent angiogenic activity. Angiogenin induces vascularization of normal and malignant tissues. Abolishes protein synthesis by specifically hydrolyzing cellular tRNAs. The chain is Angiogenin-2 from Bos taurus (Bovine).